We begin with the raw amino-acid sequence, 506 residues long: MTSKPHSDWIPYSVLDDEGRNLRQQKLDRQRALLEQKQKKKRQEPLMVQANADGRPRSRRARQSEEQAPLVESYLSSSGSTSYQVQEADSLASVQLGATRPTAPASAKRTKAAATAGGQGGAARKEKKGKHKGTSGPAALAEDKSEAQGPVQILTVGQSDHAQDAGETAAGGGERPSGQDLRATMQRKGISSSMSFDEDEEDEEENSSSSSQLNSNTRPSSATSRKSVREAASAPSPTAPEQPVDVEVQDLEEFALRPAPQGITIKCRITRDKKGMDRGMYPTYFLHLDREDGKKVFLLAGRKRKKSKTSNYLISVDPTDLSRGGDSYIGKLRSNLMGTKFTVYDNGVNPQKASSSTLESGTLRQELAAVCYETNVLGFKGPRKMSVIVPGMNMVHERVSIRPRNEHETLLARWQNKNTESIIELQNKTPVWNDDTQSYVLNFHGRVTQASVKNFQIIHGNDPDYIVMQFGRVAEDVFTMDYNYPLCALQAFAIALSSFDSKLACE.

Residues Gln-36 to Val-244 form a disordered region. Composition is skewed to low complexity over residues Leu-70–Glu-87 and Pro-101–Ala-116. The segment covering Phe-196–Asn-206 has biased composition (acidic residues). Composition is skewed to low complexity over residues Ser-207–Ser-221 and Glu-230–Pro-243.

Belongs to the TUB family. In terms of assembly, interacts with GNAQ. Interacts with TULP1.

Its subcellular location is the cytoplasm. It is found in the nucleus. The protein resides in the secreted. The protein localises to the cell membrane. In terms of biological role, functions in signal transduction from heterotrimeric G protein-coupled receptors. Binds to membranes containing phosphatidylinositol 4,5-bisphosphate. Can bind DNA (in vitro). May contribute to the regulation of transcription in the nucleus. Could be involved in the hypothalamic regulation of body weight. Contribute to stimulation of phagocytosis of apoptotic retinal pigment epithelium (RPE) cells and macrophages. The sequence is that of Tubby protein homolog (TUB) from Homo sapiens (Human).